Here is a 624-residue protein sequence, read N- to C-terminus: (-)-beta-phellandrene synthase 4, chloroplastic (624 aa).

The N-terminal 48 residues, 1–48, are a transit peptide targeting the chloroplast; it reads MAIVSSVPLASKSCLHKSLISSIHKLKPFCRTIPTLGMSRPGKSVMPS. A disordered region spans residues 41–60; sequence PGKSVMPSMSMSSPVSDDGV. Residues 44–56 show a composition bias toward low complexity; sequence SVMPSMSMSSPVS. Residues Asp375, Asp379, and Asp527 each contribute to the Mg(2+) site. Positions 375-379 match the DDXXD motif motif; the sequence is DDMYD.

This sequence belongs to the terpene synthase family. Tpsd subfamily. Mg(2+) is required as a cofactor. Mn(2+) serves as cofactor.

Its subcellular location is the plastid. The protein resides in the chloroplast. The enzyme catalyses (2E)-geranyl diphosphate = (-)-beta-phellandrene + diphosphate. It functions in the pathway terpene metabolism; oleoresin biosynthesis. In terms of biological role, terpene synthase (TPS) involved in the biosynthesis of monoterpene natural products included in conifer oleoresin secretions and volatile emissions; these compounds contribute to biotic and abiotic stress defense against herbivores and pathogens. Catalyzes the conversion of (2E)-geranyl diphosphate (GPP) to (-)-beta-phellandrene. The polypeptide is (-)-beta-phellandrene synthase 4, chloroplastic (Picea sitchensis (Sitka spruce)).